The chain runs to 434 residues: Tol-Pal system protein TolB (434 aa).

The signal sequence occupies residues 1–21 (MIVRRALALAALALAASPALA). The tract at residues 411 to 434 (GDRQTPVTSGKTDLAAPAWGPLAP) is disordered.

It belongs to the TolB family. In terms of assembly, the Tol-Pal system is composed of five core proteins: the inner membrane proteins TolA, TolQ and TolR, the periplasmic protein TolB and the outer membrane protein Pal. They form a network linking the inner and outer membranes and the peptidoglycan layer.

It is found in the periplasm. Part of the Tol-Pal system, which plays a role in outer membrane invagination during cell division and is important for maintaining outer membrane integrity. The sequence is that of Tol-Pal system protein TolB from Anaeromyxobacter sp. (strain K).